We begin with the raw amino-acid sequence, 515 residues long: tRNA-2-methylthio-N(6)-dimethylallyladenosine synthase (515 aa).

An MTTase N-terminal domain is found at 25-140 (KTYQVRTFGC…LPALLNRARH (116 aa)). Cysteine 34, cysteine 69, cysteine 103, cysteine 177, cysteine 181, and cysteine 184 together coordinate [4Fe-4S] cluster. The 231-residue stretch at 163-393 (RDSVYAGWVS…TALQDRIAAE (231 aa)) folds into the Radical SAM core domain. The region spanning 396–466 (AKQLGRKVEV…AFHLVADPAG (71 aa)) is the TRAM domain. The disordered stretch occupies residues 482–515 (DRSQADSCGVPAAGAASGKAGVSLGMPSLPTRRA). Positions 490–506 (GVPAAGAASGKAGVSLG) are enriched in low complexity.

Belongs to the methylthiotransferase family. MiaB subfamily. As to quaternary structure, monomer. The cofactor is [4Fe-4S] cluster.

The protein resides in the cytoplasm. It carries out the reaction N(6)-dimethylallyladenosine(37) in tRNA + (sulfur carrier)-SH + AH2 + 2 S-adenosyl-L-methionine = 2-methylsulfanyl-N(6)-dimethylallyladenosine(37) in tRNA + (sulfur carrier)-H + 5'-deoxyadenosine + L-methionine + A + S-adenosyl-L-homocysteine + 2 H(+). In terms of biological role, catalyzes the methylthiolation of N6-(dimethylallyl)adenosine (i(6)A), leading to the formation of 2-methylthio-N6-(dimethylallyl)adenosine (ms(2)i(6)A) at position 37 in tRNAs that read codons beginning with uridine. The protein is tRNA-2-methylthio-N(6)-dimethylallyladenosine synthase of Paenarthrobacter aurescens (strain TC1).